Consider the following 635-residue polypeptide: 1-deoxy-D-xylulose-5-phosphate synthase (635 aa).

Thiamine diphosphate-binding positions include H73 and 114–116 (SHA). D146 contributes to the Mg(2+) binding site. Thiamine diphosphate is bound by residues 147–148 (GA), N176, Y287, and E368. N176 is a Mg(2+) binding site.

It belongs to the transketolase family. DXPS subfamily. Homodimer. Mg(2+) serves as cofactor. Thiamine diphosphate is required as a cofactor.

The catalysed reaction is D-glyceraldehyde 3-phosphate + pyruvate + H(+) = 1-deoxy-D-xylulose 5-phosphate + CO2. It participates in metabolic intermediate biosynthesis; 1-deoxy-D-xylulose 5-phosphate biosynthesis; 1-deoxy-D-xylulose 5-phosphate from D-glyceraldehyde 3-phosphate and pyruvate: step 1/1. Its function is as follows. Catalyzes the acyloin condensation reaction between C atoms 2 and 3 of pyruvate and glyceraldehyde 3-phosphate to yield 1-deoxy-D-xylulose-5-phosphate (DXP). In Corynebacterium diphtheriae (strain ATCC 700971 / NCTC 13129 / Biotype gravis), this protein is 1-deoxy-D-xylulose-5-phosphate synthase.